The chain runs to 493 residues: MVLADVGGSISRALAMSSAAVVDESVLRECLNEIARALMQSDVRFKTVCDLQANIRKTVNLEALAAGTNKRRIIETSVGKELCKMLDTGKPAFVPKKGKPNVVMFVGLQGSGKTTTCTKYAHYHQRKGFKPSLVCADTFRAGAFDQLKQNATKAKIPFYGSYMESDPVKIAVEGLEKFRQEKSDLIIIDTSGRHMQEAALFEEMRQVAEATKPDLVIFVMDGSIGQAAFDQAQAFKQSASVGAVIVTKLDGHAKGGGALSAVAATKSPVIFIGTGEHIDDFDVFNVEPFVARLLGRGDLPGLIDKMESIVPADQQSELVAKLSEGAFTLRLLYEQFQNLLKMGPMSQIFSMLPGFSSELMPKGQEKQSKEKFKRYMTIMDSMTPAELDSTNPKLMTESRIIRVARGSGRKVKDVMEMLEEYKRLAKMWSKRNVSKLIPQNGKMSAQAIQKMLKVMPPQVVQQMGGKSGLEALLKQLGGGKDTSKMLAGMRGGA.

The interval 1–294 (MVLADVGGSI…NVEPFVARLL (294 aa)) is G-domain. GTP is bound by residues 107–114 (GLQGSGKT), 189–193 (DTSGR), and 247–250 (TKLD). The interval 295-493 (GRGDLPGLID…KMLAGMRGGA (199 aa)) is M-domain.

It belongs to the GTP-binding SRP family. SRP54 subfamily. Component of a signal recognition particle (SRP) complex that consists of a 7SL RNA molecule of 300 nucleotides and six protein subunits: SRP72, SRP68, SRP54, SRP19, SRP14 and SRP9.

Its subcellular location is the cytoplasm. The protein localises to the endoplasmic reticulum. It carries out the reaction GTP + H2O = GDP + phosphate + H(+). Functionally, component of the signal recognition particle (SRP) complex, a ribonucleoprotein complex that mediates the cotranslational targeting of secretory and membrane proteins to the endoplasmic reticulum (ER). As part of the SRP complex, associates with the SRP receptor (SR) component SRPRA to target secretory proteins to the endoplasmic reticulum membrane. Binds to the signal sequence of presecretory proteins when they emerge from the ribosomes. Displays basal GTPase activity, and stimulates reciprocal GTPase activation of the SR subunit SRPRA. Forms a guanosine 5'-triphosphate (GTP)-dependent complex with the SR subunit SRPRA. SR compaction and GTPase mediated rearrangement of SR drive SRP-mediated cotranslational protein translocation into the ER. Requires the presence of SRP9/SRP14 and/or SRP19 to stably interact with RNA. The protein is Signal recognition particle subunit SRP54 3 (SRP54-3) of Hordeum vulgare (Barley).